Reading from the N-terminus, the 355-residue chain is Protein RecA (355 aa).

ATP is bound at residue 72–79 (GPESSGKT).

This sequence belongs to the RecA family.

It is found in the cytoplasm. In terms of biological role, can catalyze the hydrolysis of ATP in the presence of single-stranded DNA, the ATP-dependent uptake of single-stranded DNA by duplex DNA, and the ATP-dependent hybridization of homologous single-stranded DNAs. It interacts with LexA causing its activation and leading to its autocatalytic cleavage. The chain is Protein RecA from Thermosynechococcus vestitus (strain NIES-2133 / IAM M-273 / BP-1).